Consider the following 820-residue polypeptide: Ribosome biogenesis protein ERB1 (820 aa).

A disordered region spans residues 1–111 (MVRSRSNSVK…SDAGDDEVDP (111 aa)). Over residues 9 to 19 (VKKDLKRKVDE) the composition is skewed to basic and acidic residues. Residues 20–48 (PVDVQDEFDVEGLIDEGDSDDEDEAEQEV) are compositionally biased toward acidic residues. Residues 53–64 (VTKDKKNTSKTE) are compositionally biased toward basic and acidic residues. The span at 65 to 110 (NEEDADDESDSDAELEALIGEEEDLSGSELEDELAYFSDAGDDEVD) shows a compositional bias: acidic residues. Positions 282 to 395 (RFIPSKHEAK…LRHVPGYSES (114 aa)) are required for interaction with NOP7. The interval 395–431 (SVRERFERSLDLYLAPRVRKNKLNIDPDSLIPDLPSP) is required for interaction with YTM1. WD repeat units follow at residues 447 to 486 (GHKG…ELYR) and 495 to 535 (AQDD…FDIE). The tract at residues 545-585 (GWGFAEGGREQQDIDTKGLDDDADSDSDDETGHVKKKSPPA) is disordered. Positions 551-564 (GGREQQDIDTKGLD) are enriched in basic and acidic residues. WD repeat units lie at residues 604–646 (TATK…SQSP), 649–687 (KSKG…MAKK), 690–729 (PGAR…KPYK), 733–773 (YHEK…DMMT), and 789–820 (KSGL…LWTT).

Belongs to the WD repeat BOP1/ERB1 family. As to quaternary structure, component of the NOP7 complex, composed of ERB1, NOP7 and YTM1. The complex is held together by ERB1, which interacts with NOP7 via its N-terminal domain and with YTM1 via a high-affinity interaction between the seven-bladed beta-propeller domains of the 2 proteins. The NOP7 complex associates with the 66S pre-ribosome.

The protein resides in the nucleus. The protein localises to the nucleolus. It is found in the nucleoplasm. In terms of biological role, component of the NOP7 complex, which is required for maturation of the 25S and 5.8S ribosomal RNAs and formation of the 60S ribosome. The chain is Ribosome biogenesis protein ERB1 from Yarrowia lipolytica (strain CLIB 122 / E 150) (Yeast).